Reading from the N-terminus, the 357-residue chain is Probable 3'(2'),5'-bisphosphate nucleotidase 3 (357 aa).

Residue Asp46 is the Proton acceptor of the active site. Residues Glu71, Asp135, and Ile137 each coordinate Mg(2+). The active-site Proton acceptor is the Thr140. Adenosine 3',5'-bisphosphate-binding residues include Thr140, Ser256, Lys259, and Arg273. Residues Ser256, Lys259, and Arg273 each coordinate AMP.

It belongs to the inositol monophosphatase superfamily. It depends on Mg(2+) as a cofactor.

It catalyses the reaction 3'-phosphoadenylyl sulfate + H2O = adenosine 5'-phosphosulfate + phosphate. The catalysed reaction is adenosine 3',5'-bisphosphate + H2O = AMP + phosphate. It carries out the reaction adenosine 2',5'-bisphosphate + H2O = AMP + phosphate. The enzyme catalyses 1D-myo-inositol 1,4-bisphosphate + H2O = 1D-myo-inositol 4-phosphate + phosphate. It catalyses the reaction 1D-myo-inositol 1,3,4-trisphosphate + H2O = 1D-myo-inositol 3,4-bisphosphate + phosphate. Its pathway is signal transduction; phosphatidylinositol signaling pathway. In terms of biological role, phosphatase that converts adenosine 3'-phosphate 5'-phosphosulfate (PAPS) to adenosine 5'-phosphosulfate (APS) and 3'(2')-phosphoadenosine 5'-phosphate (PAP) to AMP. Is also able to hydrolyze inositol 1,4-bisphosphate and inositol 1,3,4-trisphosphate. The polypeptide is Probable 3'(2'),5'-bisphosphate nucleotidase 3 (SAL3) (Arabidopsis thaliana (Mouse-ear cress)).